The primary structure comprises 274 residues: Centriolar and ciliogenesis-associated protein hyls-1 (274 aa).

2 disordered regions span residues 156 to 188 (RSSV…SSRP) and 255 to 274 (NNED…PYID). Positions 171–183 (VGLSTETEQSELQ) are enriched in polar residues. Residues 257 to 274 (EDWKANHDKDWSPRPYID) are compositionally biased toward basic and acidic residues.

Belongs to the HYLS1 family. As to quaternary structure, interacts with sas-4; leading to its localization into newly forming centrioles.

The protein resides in the cytoplasm. It localises to the cytoskeleton. It is found in the microtubule organizing center. The protein localises to the centrosome. Its subcellular location is the centriole. The protein resides in the cell projection. It localises to the cilium. Plays an important role in ciliogenesis. This is Centriolar and ciliogenesis-associated protein hyls-1 from Caenorhabditis elegans.